A 440-amino-acid chain; its full sequence is Tumor necrosis factor receptor superfamily member 10B (440 aa).

2 disordered regions span residues 1 to 32 (MEQR…RPGP) and 60 to 84 (DLAP…CPPG). A signal peptide spans 1–55 (MEQRGQNAPAASGARKRHGPGPREARGARPGPRVPKTLVLVVAAVLLLVSAESAL). Over 56-210 (ITQQDLAPQQ…SPGTPASPCS (155 aa)) the chain is Extracellular. 3 TNFR-Cys repeats span residues 57 to 94 (TQQD…GRDC), 97 to 137 (CKYG…NTVC), and 138 to 178 (QCEE…DIEC). The segment covering 60 to 71 (DLAPQQRAAPQQ) has biased composition (low complexity). Disulfide bonds link Cys81–Cys94, Cys97–Cys113, Cys116–Cys129, Cys119–Cys137, Cys139–Cys153, Cys156–Cys170, and Cys160–Cys178. The TAPE repeat unit spans residues 192–206 (PAVEETVTSSPGTPA). Residues 211-231 (LSGIIIGVTVAAVVLIVAVFV) traverse the membrane as a helical segment. The Cytoplasmic segment spans residues 232–440 (CKSLLWKKVL…LEGNADSAMS (209 aa)). Residues 339–422 (RQCFDDFADL…LAKQKIEDHL (84 aa)) form the Death domain.

As to quaternary structure, monomer. Can interact with TRADD and RIPK1. Interacts with HCMV protein UL141; this interaction prevents TNFRSF10B cell surface expression. Two TNFRSF10B monomers interact with a UL141 homodimer. Three TNFRSF10B molecules interact with TNFSF10 homotrimer. In the absence of stimulation, interacts with BIRC2, DDX3X and GSK3B. The interaction with BIRC2 and DDX3X is further enhanced upon receptor stimulation and accompanied by DDX3X and BIRC2 cleavage. In terms of processing, (Microbial infection) Glycosylated on Arg residue by S.typhimurium protein Ssek3. Widely expressed in adult and fetal tissues; very highly expressed in tumor cell lines such as HeLaS3, K-562, HL-60, SW480, A-549 and G-361; highly expressed in heart, peripheral blood lymphocytes, liver, pancreas, spleen, thymus, prostate, ovary, uterus, placenta, testis, esophagus, stomach and throughout the intestinal tract; not detectable in brain.

The protein resides in the membrane. Functionally, receptor for the cytotoxic ligand TNFSF10/TRAIL. The adapter molecule FADD recruits caspase-8 to the activated receptor. The resulting death-inducing signaling complex (DISC) performs caspase-8 proteolytic activation which initiates the subsequent cascade of caspases (aspartate-specific cysteine proteases) mediating apoptosis. Promotes the activation of NF-kappa-B. Essential for ER stress-induced apoptosis. The sequence is that of Tumor necrosis factor receptor superfamily member 10B (TNFRSF10B) from Homo sapiens (Human).